Here is a 91-residue protein sequence, read N- to C-terminus: Small ribosomal subunit protein uS19 (91 aa).

The protein belongs to the universal ribosomal protein uS19 family.

Protein S19 forms a complex with S13 that binds strongly to the 16S ribosomal RNA. The chain is Small ribosomal subunit protein uS19 from Erythrobacter litoralis (strain HTCC2594).